A 394-amino-acid polypeptide reads, in one-letter code: Alpha-2B adrenergic receptor (394 aa).

The helical transmembrane segment at 1-25 (AIAAVITFLILFTIFGNALVILAVL) threads the bilayer. The Cytoplasmic segment spans residues 26 to 36 (TSRSLRAPQNL). The helical transmembrane segment at 37–62 (FLVSLAAADILVATLIIPFSLANELL) threads the bilayer. Residues 63–72 (GYWYFRRTWC) are Extracellular-facing. C72 and C151 are disulfide-bonded. The helical transmembrane segment at 73 to 95 (EVYLALDVLFCTSSIVHLCAISL) threads the bilayer. The Cytoplasmic segment spans residues 96–117 (DRYWAVSRALEYNCKRTPRRIK). The helical transmembrane segment at 118 to 140 (CIILTVWLIAAAISLPPLIYKGD) threads the bilayer. The Extracellular segment spans residues 141–156 (QGPQPHGAPQCKLNQE). The chain crosses the membrane as a helical span at residues 157–180 (AWYILSSSLGSFFVPCLIMILVYL). At 181–358 (RIYLIAKRSH…LSREKRFTFV (178 aa)) the chain is on the cytoplasmic side. The segment at 191-318 (RRGPRAKGGP…GSPPLQQPQG (128 aa)) is disordered. The span at 281–298 (LEEEAEEEEEEEEEEDEP) shows a compositional bias: acidic residues. Positions 299-312 (QAVPVSPASVGSPP) are enriched in low complexity. Residues 359–382 (LAVVIGVFVLCWFPFFFSYSLSAI) form a helical membrane-spanning segment. The Extracellular segment spans residues 383–391 (CPQQCRVPH). A helical membrane pass occupies residues 392–394 (GLF).

Belongs to the G-protein coupled receptor 1 family. Adrenergic receptor subfamily. ADRA2B sub-subfamily. In terms of assembly, interacts with RAB26. Interacts with PPP1R9B. Interacts with GGA1, GGA2 and GGA3.

It is found in the cell membrane. Functionally, alpha-2 adrenergic receptors mediate the catecholamine-induced inhibition of adenylate cyclase through the action of G proteins. The sequence is that of Alpha-2B adrenergic receptor (ADRA2B) from Oryctolagus cuniculus (Rabbit).